Reading from the N-terminus, the 335-residue chain is V-set and immunoglobulin domain-containing protein 1 (335 aa).

The first 21 residues, 1-21 (MFPTMLKIFPILATLAGHVHG), serve as a signal peptide directing secretion. One can recognise an Ig-like V-type domain in the interval 22–136 (VVVTVPEKTV…SQKSVIVNVL (115 aa)). Topologically, residues 22–233 (VVVTVPEKTV…DLTSMHSDGN (212 aa)) are extracellular. 2 disulfides stabilise this stretch: C43-C115 and C160-C210. The Ig-like C2-type domain maps to 139-226 (PSKPFCKIEG…GNSTCELDLT (88 aa)). A helical transmembrane segment spans residues 234–254 (IVAGALIGAILAAVIICAIVW). At 255-335 (VLTKKAKKKK…QKEETAGSSF (81 aa)) the chain is on the cytoplasmic side. Residues 266–335 (SSNEMQVMAQ…QKEETAGSSF (70 aa)) form a disordered region. The span at 268–306 (NEMQVMAQKQSNAEYAQVPNEENTPATAVLPSNATNEQP) shows a compositional bias: polar residues. The segment covering 319 to 335 (NDEKHEVQKEETAGSSF) has biased composition (basic and acidic residues).

In terms of tissue distribution, expressed in thymocytes.

The protein localises to the membrane. The polypeptide is V-set and immunoglobulin domain-containing protein 1 (VSIG1) (Gallus gallus (Chicken)).